The primary structure comprises 177 residues: MYLTRKSIMLLRKYLLVTESQVSKCGFHIVKKKGDVLYPKRTKYSKGRCSRGCKPDGTKLGFGRYGTKSCRAGRLSYRAIEAARRATIGHSFRRAMSGQFRRNCKIWVRVLADLPITGKPAEVRMGRGKGNPTGWIARVSTGQIPFEMDGVSLANARQAARLAAHKPCSSTKFVQWS.

The protein belongs to the universal ribosomal protein uL16 family.

It is found in the mitochondrion. The chain is Large ribosomal subunit protein uL16m (RPL16) from Brassica napus (Rape).